Consider the following 309-residue polypeptide: tRNA pseudouridine synthase B (309 aa).

Catalysis depends on aspartate 39, which acts as the Nucleophile. One can recognise a PUA domain in the interval 229–306 (LPRVVVHQES…ERVLTLRKVF (78 aa)).

The protein belongs to the pseudouridine synthase TruB family. Type 1 subfamily.

It carries out the reaction uridine(55) in tRNA = pseudouridine(55) in tRNA. Its function is as follows. Responsible for synthesis of pseudouridine from uracil-55 in the psi GC loop of transfer RNAs. This Thermotoga petrophila (strain ATCC BAA-488 / DSM 13995 / JCM 10881 / RKU-1) protein is tRNA pseudouridine synthase B.